The primary structure comprises 725 residues: Glutamine-dependent NAD(+) synthetase (725 aa).

In terms of domain architecture, CN hydrolase spans 4-274 (LKVATCNLNQ…VEVIISQVDL (271 aa)). Glu44 functions as the Proton acceptor; for glutaminase activity in the catalytic mechanism. Lys113 serves as the catalytic For glutaminase activity. The Nucleophile; for glutaminase activity role is filled by Cys174. Positions 324–709 (YHSPQEEIAF…FPEEEANSNK (386 aa)) are ligase. Position 354–361 (354–361 (PLSGGADS)) interacts with ATP. Residue Ser356 is part of the active site.

In the C-terminal section; belongs to the NAD synthetase family.

It carries out the reaction deamido-NAD(+) + L-glutamine + ATP + H2O = L-glutamate + AMP + diphosphate + NAD(+) + H(+). Its pathway is cofactor biosynthesis; NAD(+) biosynthesis; NAD(+) from deamido-NAD(+) (L-Gln route): step 1/1. The chain is Glutamine-dependent NAD(+) synthetase from Arabidopsis thaliana (Mouse-ear cress).